The following is a 113-amino-acid chain: Endoribonuclease SymE (113 aa).

The SpoVT-AbrB domain occupies 29-74; sequence SRYPDYSRIPAITLKGQWLEAAGFATGTAVDVKVMEGCIVLTAQPA.

The protein belongs to the SymE family.

Its subcellular location is the cytoplasm. Involved in the degradation and recycling of damaged RNA. It is itself a target for degradation by the ATP-dependent protease Lon. The protein is Endoribonuclease SymE of Shigella flexneri serotype 5b (strain 8401).